A 772-amino-acid polypeptide reads, in one-letter code: 5-methyltetrahydropteroyltriglutamate--homocysteine methyltransferase (772 aa).

5-methyltetrahydropteroyltri-L-glutamate contacts are provided by residues 24-27 (RELK) and Lys120. Positions 404–428 (DPAVRSRTAATTDADARRSGPYPER) are disordered. L-homocysteine-binding positions include 446–448 (IGS) and Glu499. L-methionine is bound by residues 446–448 (IGS) and Glu499. Trp576 provides a ligand contact to 5-methyltetrahydropteroyltri-L-glutamate. Position 614 (Asp614) interacts with L-homocysteine. Position 614 (Asp614) interacts with L-methionine. A 5-methyltetrahydropteroyltri-L-glutamate-binding site is contributed by Glu620. Zn(2+) contacts are provided by His656, Cys658, and Glu680. His709 acts as the Proton donor in catalysis. Cys741 provides a ligand contact to Zn(2+).

The protein belongs to the vitamin-B12 independent methionine synthase family. Requires Zn(2+) as cofactor.

It carries out the reaction 5-methyltetrahydropteroyltri-L-glutamate + L-homocysteine = tetrahydropteroyltri-L-glutamate + L-methionine. It functions in the pathway amino-acid biosynthesis; L-methionine biosynthesis via de novo pathway; L-methionine from L-homocysteine (MetE route): step 1/1. Functionally, catalyzes the transfer of a methyl group from 5-methyltetrahydrofolate to homocysteine resulting in methionine formation. This Streptomyces avermitilis (strain ATCC 31267 / DSM 46492 / JCM 5070 / NBRC 14893 / NCIMB 12804 / NRRL 8165 / MA-4680) protein is 5-methyltetrahydropteroyltriglutamate--homocysteine methyltransferase.